A 417-amino-acid polypeptide reads, in one-letter code: Serine hydroxymethyltransferase (417 aa).

(6S)-5,6,7,8-tetrahydrofolate contacts are provided by residues leucine 121 and 125–127 (GHL). Lysine 229 carries the post-translational modification N6-(pyridoxal phosphate)lysine. Residue 355–357 (SPF) coordinates (6S)-5,6,7,8-tetrahydrofolate.

This sequence belongs to the SHMT family. Homodimer. Pyridoxal 5'-phosphate serves as cofactor.

It localises to the cytoplasm. It catalyses the reaction (6R)-5,10-methylene-5,6,7,8-tetrahydrofolate + glycine + H2O = (6S)-5,6,7,8-tetrahydrofolate + L-serine. It participates in one-carbon metabolism; tetrahydrofolate interconversion. Its pathway is amino-acid biosynthesis; glycine biosynthesis; glycine from L-serine: step 1/1. Catalyzes the reversible interconversion of serine and glycine with tetrahydrofolate (THF) serving as the one-carbon carrier. This reaction serves as the major source of one-carbon groups required for the biosynthesis of purines, thymidylate, methionine, and other important biomolecules. Also exhibits THF-independent aldolase activity toward beta-hydroxyamino acids, producing glycine and aldehydes, via a retro-aldol mechanism. The sequence is that of Serine hydroxymethyltransferase from Shewanella denitrificans (strain OS217 / ATCC BAA-1090 / DSM 15013).